Reading from the N-terminus, the 538-residue chain is Carotenoid 9,10(9',10')-cleavage dioxygenase 1 (538 aa).

4 residues coordinate Fe cation: H222, H270, H336, and H523.

It belongs to the carotenoid oxygenase family. As to quaternary structure, homodimer. Requires Fe(2+) as cofactor. As to expression, high expression in flowers and siliques. Also detected in stems, leaves and roots.

Its subcellular location is the cytoplasm. It catalyses the reaction all-trans-zeaxanthin + 2 O2 = 4,9-dimethyldodeca-2,4,6,8,10-pentaenedial + 2 (3R)-hydroxy-beta-ionone. Functionally, cleaves a variety of carotenoids symmetrically at both the 9-10 and 9'-10' double bonds. Active on beta,beta-carotene, lutein, zeaxanthin, all-trans-violaxanthin, 9-cis-violaxanthin and 9'-cis-neoxanthin. With most substrates, the carotenoid is symmetrically cleaved. Probably not involved in abscisic acid biosynthesis. The protein is Carotenoid 9,10(9',10')-cleavage dioxygenase 1 (CCD1) of Arabidopsis thaliana (Mouse-ear cress).